Reading from the N-terminus, the 194-residue chain is Small ribosomal subunit protein eS7 (194 aa).

It belongs to the eukaryotic ribosomal protein eS7 family.

The chain is Small ribosomal subunit protein eS7 (rps-7) from Caenorhabditis elegans.